The chain runs to 290 residues: Protoheme IX farnesyltransferase (290 aa).

A run of 9 helical transmembrane segments spans residues 8–28, 36–56, 81–101, 108–128, 133–153, 163–183, 209–229, 230–247, and 270–290; these read LTKP…YFLA, LSLL…GCVV, INIE…TGLL, LSAV…TMWY, VYGT…GYLA, VLLF…IAMF, IMIY…FGHT, GYEY…WFKV, and LAIT…SITF.

Belongs to the UbiA prenyltransferase family. Protoheme IX farnesyltransferase subfamily.

It localises to the cell inner membrane. The enzyme catalyses heme b + (2E,6E)-farnesyl diphosphate + H2O = Fe(II)-heme o + diphosphate. The protein operates within porphyrin-containing compound metabolism; heme O biosynthesis; heme O from protoheme: step 1/1. Its function is as follows. Converts heme B (protoheme IX) to heme O by substitution of the vinyl group on carbon 2 of heme B porphyrin ring with a hydroxyethyl farnesyl side group. The protein is Protoheme IX farnesyltransferase of Aliivibrio salmonicida (strain LFI1238) (Vibrio salmonicida (strain LFI1238)).